A 356-amino-acid polypeptide reads, in one-letter code: MNIELLQQLCEASAVSGDEQEVRDILINTLEPCVNEITFDGLGSFVARKGNKGPKVAVVGHMDEVGFMVTHIDESGFLRFTTIGGWWNQSMLNHRVTIRTHKGVKIPGVIGSVAPHALTEKQKQQPLSFDEMFIDIGANSREEVEKRGVEIGNFISPEANFACWGEDKVVGKALDNRIGCAMMAELLQTVNNPEITLYGVGSVEEEVGLRGAQTSAEHIKPDVVIVLDTAVAGDVPGIDNIKYPLKLGQGPGLMLFDKRYFPNQKLVAALKSCAAHNDLPLQFSTMKTGATDGGRYNVMGGGRPVVALCLPTRYLHANSGMISKADYEALLTLIRGFLTTLTAEKVNAFSQFRQVD.

Residues His61 and Asp175 each coordinate a divalent metal cation. Catalysis depends on Glu205, which acts as the Proton acceptor. Residues Glu206, Asp228, and His316 each contribute to the a divalent metal cation site.

This sequence belongs to the peptidase M42 family. A divalent metal cation serves as cofactor.

This chain is Putative aminopeptidase FrvX (frvX), found in Escherichia coli (strain K12).